A 732-amino-acid polypeptide reads, in one-letter code: Elongation factor 2 (732 aa).

The tr-type G domain occupies 19-260; that stretch reads ERIRNMGIAA…MVVRHLPNPL (242 aa). Residues 28 to 35, 94 to 98, and 148 to 151 contribute to the GTP site; these read AHIDHGKT, DTPGH, and NKVD. Diphthamide is present on H597.

It belongs to the TRAFAC class translation factor GTPase superfamily. Classic translation factor GTPase family. EF-G/EF-2 subfamily.

Its subcellular location is the cytoplasm. Its function is as follows. Catalyzes the GTP-dependent ribosomal translocation step during translation elongation. During this step, the ribosome changes from the pre-translocational (PRE) to the post-translocational (POST) state as the newly formed A-site-bound peptidyl-tRNA and P-site-bound deacylated tRNA move to the P and E sites, respectively. Catalyzes the coordinated movement of the two tRNA molecules, the mRNA and conformational changes in the ribosome. This chain is Elongation factor 2, found in Thermococcus onnurineus (strain NA1).